Consider the following 285-residue polypeptide: Shikimate dehydrogenase (NADP(+)) (285 aa).

Shikimate contacts are provided by residues 22–24 and Thr-69; that span reads SMS. Lys-73 serves as the catalytic Proton acceptor. Asp-85 is a binding site for NADP(+). Residues Asn-94 and Asp-110 each contribute to the shikimate site. NADP(+) is bound by residues 136 to 140, 160 to 165, and Met-225; these read GAGGA and NRTVAR. Tyr-227 lines the shikimate pocket. Gly-248 lines the NADP(+) pocket.

It belongs to the shikimate dehydrogenase family. As to quaternary structure, homodimer.

It catalyses the reaction shikimate + NADP(+) = 3-dehydroshikimate + NADPH + H(+). It participates in metabolic intermediate biosynthesis; chorismate biosynthesis; chorismate from D-erythrose 4-phosphate and phosphoenolpyruvate: step 4/7. Its function is as follows. Involved in the biosynthesis of the chorismate, which leads to the biosynthesis of aromatic amino acids. Catalyzes the reversible NADPH linked reduction of 3-dehydroshikimate (DHSA) to yield shikimate (SA). The polypeptide is Shikimate dehydrogenase (NADP(+)) (Caulobacter vibrioides (strain ATCC 19089 / CIP 103742 / CB 15) (Caulobacter crescentus)).